Consider the following 138-residue polypeptide: Large ribosomal subunit protein uL16 (138 aa).

The protein belongs to the universal ribosomal protein uL16 family. In terms of assembly, part of the 50S ribosomal subunit.

Its function is as follows. Binds 23S rRNA and is also seen to make contacts with the A and possibly P site tRNAs. This Chlamydia felis (strain Fe/C-56) (Chlamydophila felis) protein is Large ribosomal subunit protein uL16.